Consider the following 61-residue polypeptide: MAKDYVTGKRTHFGNTRSHALNHSRRSWKANLQKVRILVDGKPKKVWVSARTLKSGKVTRV.

Residues M1–R26 are disordered.

The protein belongs to the bacterial ribosomal protein bL28 family.

This chain is Large ribosomal subunit protein bL28, found in Lactiplantibacillus plantarum (strain ATCC BAA-793 / NCIMB 8826 / WCFS1) (Lactobacillus plantarum).